A 347-amino-acid chain; its full sequence is Tetracycline resistance determinant (347 aa).

A run of 8 helical transmembrane segments spans residues 3–20, 30–52, 73–95, 108–130, 137–156, 161–183, 204–226, and 294–316; these read VLGA…LIVA, SPAA…PVEL, CSAV…PLFL, LVVI…LIAS, LAIV…ATTG, MWGI…TVIT, CAGQ…AVAL, and GFHI…TWFL. A disordered region spans residues 321-347; sequence EETAPEEERPAESGAGAKNGPLPASDA.

It belongs to the major facilitator superfamily. TCR/Tet family.

It localises to the cell membrane. Functionally, resistance to tetracycline by an active tetracycline efflux. This is an energy-dependent process that decreases the accumulation of the antibiotic in whole cells. This protein functions as a metal-tetracycline/H(+) antiporter. This is Tetracycline resistance determinant (tetB) from Streptomyces rimosus.